The chain runs to 235 residues: Probable ribonuclease P protein subunit 3 (235 aa).

Belongs to the eukaryotic/archaeal RNase P protein component 3 family.

The protein localises to the nucleus. It carries out the reaction Endonucleolytic cleavage of RNA, removing 5'-extranucleotides from tRNA precursor.. In terms of biological role, part of ribonuclease P, a protein complex that generates mature tRNA molecules by cleaving their 5'-ends. The protein is Probable ribonuclease P protein subunit 3 of Schizosaccharomyces pombe (strain 972 / ATCC 24843) (Fission yeast).